The primary structure comprises 186 residues: UPF0301 protein Swoo_1337 (186 aa).

Belongs to the UPF0301 (AlgH) family.

In Shewanella woodyi (strain ATCC 51908 / MS32), this protein is UPF0301 protein Swoo_1337.